The sequence spans 189 residues: dCTP deaminase, dUMP-forming (189 aa).

DCTP is bound by residues 101-106 (KSSLGR), Asp-119, 127-129 (TLE), Gln-148, Tyr-162, and Gln-174. The active-site Proton donor/acceptor is Glu-129. The segment at 166 to 189 (AVGSKYQGQRGPTPSRSHLNFIKS) is disordered. Positions 171 to 189 (YQGQRGPTPSRSHLNFIKS) are enriched in polar residues.

This sequence belongs to the dCTP deaminase family. In terms of assembly, homotrimer.

It catalyses the reaction dCTP + 2 H2O = dUMP + NH4(+) + diphosphate. Its pathway is pyrimidine metabolism; dUMP biosynthesis; dUMP from dCTP: step 1/1. Bifunctional enzyme that catalyzes both the deamination of dCTP to dUTP and the hydrolysis of dUTP to dUMP without releasing the toxic dUTP intermediate. This is dCTP deaminase, dUMP-forming from Mycolicibacterium smegmatis (strain ATCC 700084 / mc(2)155) (Mycobacterium smegmatis).